Reading from the N-terminus, the 144-residue chain is Nucleoside diphosphate kinase (144 aa).

The ATP site is built by lysine 9, phenylalanine 57, arginine 85, threonine 91, arginine 102, and asparagine 112. The Pros-phosphohistidine intermediate role is filled by histidine 120.

Belongs to the NDK family. Homotetramer. Mg(2+) is required as a cofactor.

It localises to the cytoplasm. It carries out the reaction a 2'-deoxyribonucleoside 5'-diphosphate + ATP = a 2'-deoxyribonucleoside 5'-triphosphate + ADP. The catalysed reaction is a ribonucleoside 5'-diphosphate + ATP = a ribonucleoside 5'-triphosphate + ADP. Its function is as follows. Major role in the synthesis of nucleoside triphosphates other than ATP. The ATP gamma phosphate is transferred to the NDP beta phosphate via a ping-pong mechanism, using a phosphorylated active-site intermediate. The polypeptide is Nucleoside diphosphate kinase (Streptococcus uberis (strain ATCC BAA-854 / 0140J)).